We begin with the raw amino-acid sequence, 271 residues long: Uridine-cytidine kinase 1-B (271 aa).

Residue 24–32 coordinates ATP; that stretch reads GGTASGKST. D81, Y109, H114, R163, R172, and Q180 together coordinate substrate. D209 is an ATP binding site. Positions 240–271 are disordered; the sequence is RSQKRTLPGQGDSGGLLLQGKRTHLESSSRPH. Residues 246 to 259 show a composition bias toward low complexity; the sequence is LPGQGDSGGLLLQG. Residues 262–271 show a composition bias toward basic and acidic residues; the sequence is THLESSSRPH.

The protein belongs to the uridine kinase family.

The catalysed reaction is uridine + ATP = UMP + ADP + H(+). It catalyses the reaction cytidine + ATP = CMP + ADP + H(+). Its pathway is pyrimidine metabolism; CTP biosynthesis via salvage pathway; CTP from cytidine: step 1/3. The protein operates within pyrimidine metabolism; UMP biosynthesis via salvage pathway; UMP from uridine: step 1/1. Phosphorylates uridine and cytidine to uridine monophosphate and cytidine monophosphate. Does not phosphorylate deoxyribonucleosides or purine ribonucleosides. Can use ATP or GTP as a phosphate donor. This Xenopus laevis (African clawed frog) protein is Uridine-cytidine kinase 1-B (uck1-b).